The following is a 196-amino-acid chain: Imidazole glycerol phosphate synthase subunit HisH (196 aa).

A Glutamine amidotransferase type-1 domain is found at 2–196 (KVAVVKYNAG…ERVLRNFLDL (195 aa)). C77 functions as the Nucleophile in the catalytic mechanism. Residues H178 and E180 contribute to the active site.

In terms of assembly, heterodimer of HisH and HisF.

It localises to the cytoplasm. It carries out the reaction 5-[(5-phospho-1-deoxy-D-ribulos-1-ylimino)methylamino]-1-(5-phospho-beta-D-ribosyl)imidazole-4-carboxamide + L-glutamine = D-erythro-1-(imidazol-4-yl)glycerol 3-phosphate + 5-amino-1-(5-phospho-beta-D-ribosyl)imidazole-4-carboxamide + L-glutamate + H(+). The enzyme catalyses L-glutamine + H2O = L-glutamate + NH4(+). The protein operates within amino-acid biosynthesis; L-histidine biosynthesis; L-histidine from 5-phospho-alpha-D-ribose 1-diphosphate: step 5/9. IGPS catalyzes the conversion of PRFAR and glutamine to IGP, AICAR and glutamate. The HisH subunit catalyzes the hydrolysis of glutamine to glutamate and ammonia as part of the synthesis of IGP and AICAR. The resulting ammonia molecule is channeled to the active site of HisF. This Bacteroides thetaiotaomicron (strain ATCC 29148 / DSM 2079 / JCM 5827 / CCUG 10774 / NCTC 10582 / VPI-5482 / E50) protein is Imidazole glycerol phosphate synthase subunit HisH.